Reading from the N-terminus, the 160-residue chain is Ribosome maturation factor RimP (160 aa).

The protein belongs to the RimP family.

The protein localises to the cytoplasm. Functionally, required for maturation of 30S ribosomal subunits. This is Ribosome maturation factor RimP from Symbiobacterium thermophilum (strain DSM 24528 / JCM 14929 / IAM 14863 / T).